The primary structure comprises 227 residues: Cytosolic-abundant heat soluble protein 106094 (227 aa).

The interval methionine 1 to lysine 28 is disordered. Residues valine 90–glutamine 140 adopt a coiled-coil conformation. 2 CAHS motif regions span residues tyrosine 122–glutamine 140 and glutamine 159–glutamate 177. The interval leucine 198–arginine 227 is disordered. The segment covering lysine 217–arginine 227 has biased composition (basic and acidic residues).

It belongs to the Cytosolic-abundant heat soluble protein (CAHS) family.

It localises to the cytoplasm. CAHS proteins are cytosolic heat soluble proteins that seem to contribute to the anhydrobiosis in tardigrades, but their specific mechanisms are yet to be identified. It is possible that protection during anhydrobiosis might occur via the stabilization of vitrifying small molecules such as sugars, but not via the direct glass transition of CAHS proteins themselves. The protein is Cytosolic-abundant heat soluble protein 106094 of Paramacrobiotus richtersi (Water bear).